Reading from the N-terminus, the 362-residue chain is Peptide chain release factor 1 (362 aa).

The residue at position 238 (Gln238) is an N5-methylglutamine.

This sequence belongs to the prokaryotic/mitochondrial release factor family. Post-translationally, methylated by PrmC. Methylation increases the termination efficiency of RF1.

Its subcellular location is the cytoplasm. In terms of biological role, peptide chain release factor 1 directs the termination of translation in response to the peptide chain termination codons UAG and UAA. In Psychrobacter arcticus (strain DSM 17307 / VKM B-2377 / 273-4), this protein is Peptide chain release factor 1.